The sequence spans 530 residues: Phosphoenolpyruvate carboxykinase (ATP) (530 aa).

Arg57, Tyr193, and Lys199 together coordinate substrate. Residues Lys199, His218, and 234 to 242 contribute to the ATP site; that span reads GLSGTGKTT. 2 residues coordinate Mn(2+): Lys199 and His218. Asp255 contacts Mn(2+). ATP contacts are provided by Glu283, Arg320, and Thr445. Residue Arg320 coordinates substrate.

It belongs to the phosphoenolpyruvate carboxykinase (ATP) family. Mn(2+) serves as cofactor.

It localises to the cytoplasm. The catalysed reaction is oxaloacetate + ATP = phosphoenolpyruvate + ADP + CO2. Its pathway is carbohydrate biosynthesis; gluconeogenesis. In terms of biological role, involved in the gluconeogenesis. Catalyzes the conversion of oxaloacetate (OAA) to phosphoenolpyruvate (PEP) through direct phosphoryl transfer between the nucleoside triphosphate and OAA. The protein is Phosphoenolpyruvate carboxykinase (ATP) of Leptospira biflexa serovar Patoc (strain Patoc 1 / Ames).